A 340-amino-acid chain; its full sequence is Replication initiation protein (340 aa).

The interval 38-58 (PERKRTKRRRGEHSTKPKCEN) is disordered.

This chain is Replication initiation protein (repA1), found in Escherichia coli.